We begin with the raw amino-acid sequence, 121 residues long: Small ribosomal subunit protein bS6 (121 aa).

A disordered region spans residues 99–121 (PLPAPRVAPGTEAPAEPEAAAPA). Positions 110–121 (EAPAEPEAAAPA) are enriched in low complexity.

The protein belongs to the bacterial ribosomal protein bS6 family.

Its function is as follows. Binds together with bS18 to 16S ribosomal RNA. The polypeptide is Small ribosomal subunit protein bS6 (Synechococcus sp. (strain CC9311)).